Here is a 192-residue protein sequence, read N- to C-terminus: Fe/S biogenesis protein NfuA (192 aa).

The [4Fe-4S] cluster site is built by C149 and C152.

This sequence belongs to the NfuA family. Homodimer. [4Fe-4S] cluster serves as cofactor.

In terms of biological role, involved in iron-sulfur cluster biogenesis. Binds a 4Fe-4S cluster, can transfer this cluster to apoproteins, and thereby intervenes in the maturation of Fe/S proteins. Could also act as a scaffold/chaperone for damaged Fe/S proteins. This chain is Fe/S biogenesis protein NfuA, found in Shewanella pealeana (strain ATCC 700345 / ANG-SQ1).